Reading from the N-terminus, the 392-residue chain is Formate-dependent phosphoribosylglycinamide formyltransferase (392 aa).

N(1)-(5-phospho-beta-D-ribosyl)glycinamide is bound by residues 22 to 23 (EL) and Glu-82. ATP contacts are provided by residues Arg-114, Lys-155, 160-165 (SSGKGQ), 195-198 (EGVV), and Glu-203. In terms of domain architecture, ATP-grasp spans 119–308 (RLAAEELQLP…EFALHVRAFL (190 aa)). Mg(2+) contacts are provided by Glu-267 and Glu-279. Residues Asp-286, Lys-355, and 362–363 (RR) each bind N(1)-(5-phospho-beta-D-ribosyl)glycinamide.

Belongs to the PurK/PurT family. In terms of assembly, homodimer.

The catalysed reaction is N(1)-(5-phospho-beta-D-ribosyl)glycinamide + formate + ATP = N(2)-formyl-N(1)-(5-phospho-beta-D-ribosyl)glycinamide + ADP + phosphate + H(+). It participates in purine metabolism; IMP biosynthesis via de novo pathway; N(2)-formyl-N(1)-(5-phospho-D-ribosyl)glycinamide from N(1)-(5-phospho-D-ribosyl)glycinamide (formate route): step 1/1. In terms of biological role, involved in the de novo purine biosynthesis. Catalyzes the transfer of formate to 5-phospho-ribosyl-glycinamide (GAR), producing 5-phospho-ribosyl-N-formylglycinamide (FGAR). Formate is provided by PurU via hydrolysis of 10-formyl-tetrahydrofolate. This Shigella flexneri protein is Formate-dependent phosphoribosylglycinamide formyltransferase.